A 153-amino-acid polypeptide reads, in one-letter code: Small ribosomal subunit protein bS16 (153 aa).

The interval 114 to 153 is disordered; it reads ENEPVGEAITPKKKKAKAEDAEAAADAPAEAAAESEAADK. Positions 137 to 153 are enriched in low complexity; that stretch reads AADAPAEAAAESEAADK.

This sequence belongs to the bacterial ribosomal protein bS16 family.

The chain is Small ribosomal subunit protein bS16 from Rhodococcus jostii (strain RHA1).